The sequence spans 172 residues: Protein GrpE (172 aa).

The tract at residues 1–23 (MNQDHPEFDSEDLSQNPPETDPL) is disordered.

Belongs to the GrpE family. As to quaternary structure, homodimer.

The protein localises to the cytoplasm. In terms of biological role, participates actively in the response to hyperosmotic and heat shock by preventing the aggregation of stress-denatured proteins, in association with DnaK and GrpE. It is the nucleotide exchange factor for DnaK and may function as a thermosensor. Unfolded proteins bind initially to DnaJ; upon interaction with the DnaJ-bound protein, DnaK hydrolyzes its bound ATP, resulting in the formation of a stable complex. GrpE releases ADP from DnaK; ATP binding to DnaK triggers the release of the substrate protein, thus completing the reaction cycle. Several rounds of ATP-dependent interactions between DnaJ, DnaK and GrpE are required for fully efficient folding. This is Protein GrpE from Xanthomonas axonopodis pv. citri (strain 306).